The primary structure comprises 157 residues: Endoribonuclease YbeY (157 aa).

Zn(2+) is bound by residues His-123, His-127, and His-133.

This sequence belongs to the endoribonuclease YbeY family. Requires Zn(2+) as cofactor.

It localises to the cytoplasm. Functionally, single strand-specific metallo-endoribonuclease involved in late-stage 70S ribosome quality control and in maturation of the 3' terminus of the 16S rRNA. This chain is Endoribonuclease YbeY, found in Limosilactobacillus fermentum (strain NBRC 3956 / LMG 18251) (Lactobacillus fermentum).